The primary structure comprises 162 residues: Phosphopantetheine adenylyltransferase (162 aa).

A substrate-binding site is contributed by threonine 14. Residues 14-15 (TF) and histidine 22 contribute to the ATP site. Lysine 46, leucine 78, and arginine 92 together coordinate substrate. ATP-binding positions include 93-95 (GLR), glutamate 103, and 128-134 (HSFISSS).

The protein belongs to the bacterial CoaD family. Homohexamer. It depends on Mg(2+) as a cofactor.

It is found in the cytoplasm. The catalysed reaction is (R)-4'-phosphopantetheine + ATP + H(+) = 3'-dephospho-CoA + diphosphate. Its pathway is cofactor biosynthesis; coenzyme A biosynthesis; CoA from (R)-pantothenate: step 4/5. Its function is as follows. Reversibly transfers an adenylyl group from ATP to 4'-phosphopantetheine, yielding dephospho-CoA (dPCoA) and pyrophosphate. The polypeptide is Phosphopantetheine adenylyltransferase (Xylella fastidiosa (strain 9a5c)).